A 292-amino-acid polypeptide reads, in one-letter code: Protein CHLOROPLAST ENHANCING STRESS TOLERANCE, chloroplastic (292 aa).

Pro residues predominate over residues Met-1–Pro-15. The N-terminal 67 residues, Met-1 to Ala-67, are a transit peptide targeting the chloroplast. Disordered regions lie at residues Met-1–Asp-119 and Met-206–Asp-225. Low complexity-rich tracts occupy residues Ser-49–Arg-58 and Ala-94–Ala-107. A helical transmembrane segment spans residues Ala-267 to Phe-287.

The protein belongs to the Y3IP1/CEST family.

The protein localises to the plastid. The protein resides in the chloroplast thylakoid membrane. In terms of biological role, involved in light-induced chloroplast development and growth. Involved in the plant response to abiotic and photooxidative stresses. May be involved in the suppression of photooxidative damage. The polypeptide is Protein CHLOROPLAST ENHANCING STRESS TOLERANCE, chloroplastic (Oryza sativa subsp. indica (Rice)).